Consider the following 236-residue polypeptide: Leucyl/phenylalanyl-tRNA--protein transferase (236 aa).

It belongs to the L/F-transferase family.

It localises to the cytoplasm. It carries out the reaction N-terminal L-lysyl-[protein] + L-leucyl-tRNA(Leu) = N-terminal L-leucyl-L-lysyl-[protein] + tRNA(Leu) + H(+). It catalyses the reaction N-terminal L-arginyl-[protein] + L-leucyl-tRNA(Leu) = N-terminal L-leucyl-L-arginyl-[protein] + tRNA(Leu) + H(+). The enzyme catalyses L-phenylalanyl-tRNA(Phe) + an N-terminal L-alpha-aminoacyl-[protein] = an N-terminal L-phenylalanyl-L-alpha-aminoacyl-[protein] + tRNA(Phe). Its function is as follows. Functions in the N-end rule pathway of protein degradation where it conjugates Leu, Phe and, less efficiently, Met from aminoacyl-tRNAs to the N-termini of proteins containing an N-terminal arginine or lysine. The chain is Leucyl/phenylalanyl-tRNA--protein transferase from Shewanella loihica (strain ATCC BAA-1088 / PV-4).